The sequence spans 607 residues: Elongation factor 4 (607 aa).

Residues 11–193 (GKIRNFSIIA…QIVEKVPAPT (183 aa)) form the tr-type G domain. GTP-binding positions include 23-28 (DHGKST) and 140-143 (NKID).

It belongs to the TRAFAC class translation factor GTPase superfamily. Classic translation factor GTPase family. LepA subfamily.

It localises to the cell membrane. The catalysed reaction is GTP + H2O = GDP + phosphate + H(+). Its function is as follows. Required for accurate and efficient protein synthesis under certain stress conditions. May act as a fidelity factor of the translation reaction, by catalyzing a one-codon backward translocation of tRNAs on improperly translocated ribosomes. Back-translocation proceeds from a post-translocation (POST) complex to a pre-translocation (PRE) complex, thus giving elongation factor G a second chance to translocate the tRNAs correctly. Binds to ribosomes in a GTP-dependent manner. In Streptococcus pneumoniae (strain JJA), this protein is Elongation factor 4.